Consider the following 456-residue polypeptide: Alcohol acyltransferase 1 (456 aa).

Residues H166 and D382 each act as proton acceptor in the active site.

This sequence belongs to the plant acyltransferase family.

In terms of biological role, involved in the biosynthesis of volatile esters which confer kiwifruit flavor. Alcohol acyl transferase that can use a wide range of alcohols as substrate to produce esters. The chain is Alcohol acyltransferase 1 from Actinidia chinensis var. chinensis (Chinese soft-hair kiwi).